We begin with the raw amino-acid sequence, 308 residues long: Pseudouridine-5'-phosphate glycosidase (308 aa).

The active-site Proton donor is the E28. K89 and V109 together coordinate substrate. Residue D141 coordinates Mn(2+). 143-145 (SAD) provides a ligand contact to substrate. K162 acts as the Nucleophile in catalysis.

It belongs to the pseudouridine-5'-phosphate glycosidase family. As to quaternary structure, homotrimer. It depends on Mn(2+) as a cofactor.

It carries out the reaction D-ribose 5-phosphate + uracil = psi-UMP + H2O. In terms of biological role, catalyzes the reversible cleavage of pseudouridine 5'-phosphate (PsiMP) to ribose 5-phosphate and uracil. Functions biologically in the cleavage direction, as part of a pseudouridine degradation pathway. This is Pseudouridine-5'-phosphate glycosidase from Brachyspira hyodysenteriae (strain ATCC 49526 / WA1).